The primary structure comprises 82 residues: Delta-ctenitoxin-Pn1a (82 aa).

Positions 1-16 are cleaved as a signal peptide; the sequence is MKVAIVFLSLLVLAFA. The propeptide occupies 17–34; the sequence is SESIEENREEFPVEESAR. 5 disulfide bridges follow: cysteine 35/cysteine 49, cysteine 42/cysteine 55, cysteine 46/cysteine 82, cysteine 48/cysteine 65, and cysteine 57/cysteine 63.

It belongs to the neurotoxin 03 (Tx2) family. 05 subfamily. In terms of tissue distribution, expressed by the venom gland.

The protein resides in the secreted. This neurotoxin binds at site 3 of insect voltage-activated sodium channels (Nav) and prolongs evoked axonal action potentials by a slowing down of sodium current inactivation. The toxin also inhibits glutamate uptake from rat brain synaptosomes. It reversibly inhibits the N-methyl-D-aspartate (NMDA)-subtype of ionotropic glutamate receptor (GRIN). In addition, the toxin shows antinociceptive effect in all rat pain models tested (inflammatory, neuropathic and nociceptive). The antinociceptive effect is partially blocked when selective antagonists of both mu- and delta-opioid receptors are administered, revealing that the antinociceptive effect of the toxin involves both opioid and cannabinoid endogenous systems. In vivo, it is highly toxic to house fly (Musca domestica), toxic to cockroach, but has no effect when intracerebroventricularly injected into mice. The sequence is that of Delta-ctenitoxin-Pn1a from Phoneutria nigriventer (Brazilian armed spider).